A 599-amino-acid polypeptide reads, in one-letter code: Elongation factor 4 (599 aa).

The region spanning 5-187 (DLIRNFSIVA…AIVTRLPPPK (183 aa)) is the tr-type G domain. GTP-binding positions include 17-22 (DHGKST) and 134-137 (NKID).

The protein belongs to the TRAFAC class translation factor GTPase superfamily. Classic translation factor GTPase family. LepA subfamily.

It localises to the cell inner membrane. The catalysed reaction is GTP + H2O = GDP + phosphate + H(+). In terms of biological role, required for accurate and efficient protein synthesis under certain stress conditions. May act as a fidelity factor of the translation reaction, by catalyzing a one-codon backward translocation of tRNAs on improperly translocated ribosomes. Back-translocation proceeds from a post-translocation (POST) complex to a pre-translocation (PRE) complex, thus giving elongation factor G a second chance to translocate the tRNAs correctly. Binds to ribosomes in a GTP-dependent manner. The chain is Elongation factor 4 from Cereibacter sphaeroides (strain ATCC 17025 / ATH 2.4.3) (Rhodobacter sphaeroides).